The chain runs to 678 residues: UvrABC system protein B (678 aa).

The 387-residue stretch at 31–417 (EGLENGLAHQ…KSGGEIIDQV (387 aa)) folds into the Helicase ATP-binding domain. An ATP-binding site is contributed by 44–51 (GVTGSGKT). The short motif at 97–120 (YYDYYQPEAYVPSSDTFIEKDASI) is the Beta-hairpin element. The Helicase C-terminal domain maps to 436–589 (QVDDLLSEAR…QMKYNEARGI (154 aa)). One can recognise a UVR domain in the interval 638–673 (QQQIKKLEQQMYKYAQDLEFEKAAAVRDQLQQLREH).

It belongs to the UvrB family. Forms a heterotetramer with UvrA during the search for lesions. Interacts with UvrC in an incision complex.

It localises to the cytoplasm. The UvrABC repair system catalyzes the recognition and processing of DNA lesions. A damage recognition complex composed of 2 UvrA and 2 UvrB subunits scans DNA for abnormalities. Upon binding of the UvrA(2)B(2) complex to a putative damaged site, the DNA wraps around one UvrB monomer. DNA wrap is dependent on ATP binding by UvrB and probably causes local melting of the DNA helix, facilitating insertion of UvrB beta-hairpin between the DNA strands. Then UvrB probes one DNA strand for the presence of a lesion. If a lesion is found the UvrA subunits dissociate and the UvrB-DNA preincision complex is formed. This complex is subsequently bound by UvrC and the second UvrB is released. If no lesion is found, the DNA wraps around the other UvrB subunit that will check the other stand for damage. The chain is UvrABC system protein B from Pasteurella multocida (strain Pm70).